A 468-amino-acid polypeptide reads, in one-letter code: Ribulose bisphosphate carboxylase large chain (468 aa).

Residue K7 is modified to N6,N6,N6-trimethyllysine. N116 and T166 together coordinate substrate. Residue K168 is the Proton acceptor of the active site. K170 lines the substrate pocket. K194, D196, and E197 together coordinate Mg(2+). K194 bears the N6-carboxylysine mark. H287 serves as the catalytic Proton acceptor. Positions 288, 320, and 372 each coordinate substrate.

It belongs to the RuBisCO large chain family. Type I subfamily. Heterohexadecamer of 8 large chains and 8 small chains. Mg(2+) is required as a cofactor.

It is found in the plastid. The protein resides in the chloroplast. It catalyses the reaction 2 (2R)-3-phosphoglycerate + 2 H(+) = D-ribulose 1,5-bisphosphate + CO2 + H2O. The enzyme catalyses D-ribulose 1,5-bisphosphate + O2 = 2-phosphoglycolate + (2R)-3-phosphoglycerate + 2 H(+). Its function is as follows. RuBisCO catalyzes two reactions: the carboxylation of D-ribulose 1,5-bisphosphate, the primary event in carbon dioxide fixation, as well as the oxidative fragmentation of the pentose substrate in the photorespiration process. Both reactions occur simultaneously and in competition at the same active site. This is Ribulose bisphosphate carboxylase large chain from Couroupita guianensis (Cannonball tree).